A 485-amino-acid chain; its full sequence is Cysteine--tRNA ligase (485 aa).

Residue cysteine 29 participates in Zn(2+) binding. The 'HIGH' region signature appears at valine 31 to histidine 41. Zn(2+) is bound by residues cysteine 209, histidine 234, and glutamate 238. The short motif at lysine 266–serine 270 is the 'KMSKS' region element. Lysine 269 is an ATP binding site.

Belongs to the class-I aminoacyl-tRNA synthetase family. As to quaternary structure, monomer. It depends on Zn(2+) as a cofactor.

The protein localises to the cytoplasm. It carries out the reaction tRNA(Cys) + L-cysteine + ATP = L-cysteinyl-tRNA(Cys) + AMP + diphosphate. The protein is Cysteine--tRNA ligase of Geobacter metallireducens (strain ATCC 53774 / DSM 7210 / GS-15).